Here is a 336-residue protein sequence, read N- to C-terminus: Delta(1)-pyrroline-2-carboxylate reductase (336 aa).

The active-site Charge relay system is the S47. H48 functions as the Proton donor in the catalytic mechanism. R52 contacts substrate. 120–124 (HFSAL) contacts NADP(+). Residue T160 coordinates substrate. Residue 178–180 (DFA) participates in NADP(+) binding. Substrate is bound at residue 186–187 (RG). D188 (charge relay system) is an active-site residue. NADP(+) is bound by residues 229-230 (HK) and 304-310 (RLPSQRR).

Belongs to the LDH2/MDH2 oxidoreductase family. As to quaternary structure, homodimer.

The enzyme catalyses L-proline + NAD(+) = 1-pyrroline-2-carboxylate + NADH + H(+). It catalyses the reaction L-proline + NADP(+) = 1-pyrroline-2-carboxylate + NADPH + H(+). Functionally, catalyzes the reduction of Delta(1)-pyrroline-2-carboxylate (Pyr2C) to L-proline, using NADPH as the electron donor. May be involved in a degradation pathway that converts trans-3-hydroxy-L-proline (t3LHyp) to L-proline. This chain is Delta(1)-pyrroline-2-carboxylate reductase, found in Pseudomonas fluorescens (strain ATCC BAA-477 / NRRL B-23932 / Pf-5).